The following is a 171-amino-acid chain: Putative antiporter subunit mnhG2 (171 aa).

3 helical membrane-spanning segments follow: residues I11–V31, V51–V71, and R72–A92. The segment covering D144–E156 has biased composition (basic and acidic residues). The interval D144 to D171 is disordered.

Belongs to the CPA3 antiporters (TC 2.A.63) subunit G family. As to quaternary structure, may form a heterooligomeric complex that consists of seven subunits: mnhA2, mnhB2, mnhC2, mnhD2, mnhE2, mnhF2 and mnhG2.

It is found in the cell membrane. In Staphylococcus haemolyticus (strain JCSC1435), this protein is Putative antiporter subunit mnhG2 (mnhG2).